Reading from the N-terminus, the 461-residue chain is Bifunctional protein GlmU (461 aa).

The tract at residues 1-232 (MNLQIIILAA…SFEVQGINNR (232 aa)) is pyrophosphorylase. UDP-N-acetyl-alpha-D-glucosamine is bound by residues 8–11 (LAAG), Lys-22, Gln-73, and 78–79 (GT). Residue Asp-102 participates in Mg(2+) binding. UDP-N-acetyl-alpha-D-glucosamine is bound by residues Gly-142, Glu-157, and Asn-230. Position 230 (Asn-230) interacts with Mg(2+). Residues 233-253 (QQLQQLERIWQQRAANQLMEK) form a linker region. The segment at 254–461 (GVTLADANRF…WKRPAKRERD (208 aa)) is N-acetyltransferase. Positions 336 and 354 each coordinate UDP-N-acetyl-alpha-D-glucosamine. Residue His-366 is the Proton acceptor of the active site. Residues Tyr-369 and Asn-380 each coordinate UDP-N-acetyl-alpha-D-glucosamine. Acetyl-CoA-binding positions include Ala-383, 389 to 390 (NY), Ser-408, and Ala-426.

This sequence in the N-terminal section; belongs to the N-acetylglucosamine-1-phosphate uridyltransferase family. The protein in the C-terminal section; belongs to the transferase hexapeptide repeat family. Homotrimer. Mg(2+) is required as a cofactor.

It is found in the cytoplasm. It carries out the reaction alpha-D-glucosamine 1-phosphate + acetyl-CoA = N-acetyl-alpha-D-glucosamine 1-phosphate + CoA + H(+). It catalyses the reaction N-acetyl-alpha-D-glucosamine 1-phosphate + UTP + H(+) = UDP-N-acetyl-alpha-D-glucosamine + diphosphate. The protein operates within nucleotide-sugar biosynthesis; UDP-N-acetyl-alpha-D-glucosamine biosynthesis; N-acetyl-alpha-D-glucosamine 1-phosphate from alpha-D-glucosamine 6-phosphate (route II): step 2/2. Its pathway is nucleotide-sugar biosynthesis; UDP-N-acetyl-alpha-D-glucosamine biosynthesis; UDP-N-acetyl-alpha-D-glucosamine from N-acetyl-alpha-D-glucosamine 1-phosphate: step 1/1. It functions in the pathway bacterial outer membrane biogenesis; LPS lipid A biosynthesis. Its function is as follows. Catalyzes the last two sequential reactions in the de novo biosynthetic pathway for UDP-N-acetylglucosamine (UDP-GlcNAc). The C-terminal domain catalyzes the transfer of acetyl group from acetyl coenzyme A to glucosamine-1-phosphate (GlcN-1-P) to produce N-acetylglucosamine-1-phosphate (GlcNAc-1-P), which is converted into UDP-GlcNAc by the transfer of uridine 5-monophosphate (from uridine 5-triphosphate), a reaction catalyzed by the N-terminal domain. In Legionella pneumophila (strain Lens), this protein is Bifunctional protein GlmU.